The following is a 126-amino-acid chain: Small ribosomal subunit protein uS13 (126 aa).

Residues 96 to 126 are disordered; that stretch reads LPVRGQQTKTNARTRKGRRKGTVANKKKVSK. The segment covering 107–126 has biased composition (basic residues); it reads ARTRKGRRKGTVANKKKVSK.

This sequence belongs to the universal ribosomal protein uS13 family. Part of the 30S ribosomal subunit. Forms a loose heterodimer with protein S19. Forms two bridges to the 50S subunit in the 70S ribosome.

Functionally, located at the top of the head of the 30S subunit, it contacts several helices of the 16S rRNA. In the 70S ribosome it contacts the 23S rRNA (bridge B1a) and protein L5 of the 50S subunit (bridge B1b), connecting the 2 subunits; these bridges are implicated in subunit movement. Contacts the tRNAs in the A and P-sites. The sequence is that of Small ribosomal subunit protein uS13 from Hydrogenobaculum sp. (strain Y04AAS1).